The primary structure comprises 483 residues: MRDGEQTPGVALTKEKKLLIARALDEMKINVIEAGSAITSAGERESVRAVANAGLSAEICSYCRIVKTDVDHALECDVDSIHLVVPVSDLHIRTKIKKDRDTVRQIAADVTEYAKEHGLIVELSGEDSSRADLGFLKAVYSDGIDAGADRLCFCDTVGLLVPEKTTEIFRDLSSSLKAPISIHCHNDFGLATANTVAALAAGAKQAHVTINGLGERAGNASLEEVVMCLEWLYKYDTGIKHEQIYRTSRLVSRLTGIPVSPNKALVGGNAFTHEAGIHVHGLLADKATYEPMSPEYIGRQRQIVLGKHAGRSSITLALKEMGLEADDAQTEEIFNRVKQMGDQGKHVTDADLQIIAETVLDIYKEPLVKLEEFTIVSGNRVTPTASIKLNVKDKEIVQAGIGNGPVDAVINAIRRAVSSCAEDVILEEYHVDAVTGGTDALVEVRVKLSKEGKSITASGARTDIIMASVEAVMNGLNRLVRAE.

Positions 1-245 (MRDGEQTPGV…DTGIKHEQIY (245 aa)) constitute a Pyruvate carboxyltransferase domain.

This sequence belongs to the alpha-IPM synthase/homocitrate synthase family. Homodimer.

It carries out the reaction pyruvate + acetyl-CoA + H2O = (3R)-citramalate + CoA + H(+). It functions in the pathway amino-acid biosynthesis; L-isoleucine biosynthesis; 2-oxobutanoate from pyruvate: step 1/3. Its function is as follows. Catalyzes the condensation of pyruvate and acetyl-coenzyme A to form (R)-citramalate. This chain is Putative (R)-citramalate synthase CimA, found in Methanosarcina mazei (strain ATCC BAA-159 / DSM 3647 / Goe1 / Go1 / JCM 11833 / OCM 88) (Methanosarcina frisia).